The primary structure comprises 205 residues: High frequency lysogenization protein HflD homolog (205 aa).

The protein belongs to the HflD family.

The protein localises to the cytoplasm. Its subcellular location is the cell inner membrane. The protein is High frequency lysogenization protein HflD homolog of Haemophilus influenzae (strain ATCC 51907 / DSM 11121 / KW20 / Rd).